Consider the following 363-residue polypeptide: Zinc phosphodiesterase ELAC protein 1 (363 aa).

H62, H64, D66, H67, H182, D253, and H313 together coordinate Zn(2+). D66 acts as the Proton acceptor in catalysis.

It belongs to the RNase Z family. As to quaternary structure, homodimer. The cofactor is Zn(2+). In terms of tissue distribution, widely expressed. Expressed in heart, brain, placenta, lung, liver, skeletal muscle, kidney and pancreas.

The protein resides in the cytoplasm. The protein localises to the cytosol. It localises to the nucleus. It catalyses the reaction Endonucleolytic cleavage of RNA, removing extra 3' nucleotides from tRNA precursor, generating 3' termini of tRNAs. A 3'-hydroxy group is left at the tRNA terminus and a 5'-phosphoryl group is left at the trailer molecule.. Zinc phosphodiesterase, which displays some tRNA 3'-processing endonuclease activity. Specifically involved in tRNA repair: acts downstream of the ribosome-associated quality control (RQC) pathway by removing a 2',3'-cyclic phosphate from tRNAs following cleavage by ANKZF1. tRNAs are then processed by TRNT1. This Homo sapiens (Human) protein is Zinc phosphodiesterase ELAC protein 1.